Consider the following 288-residue polypeptide: 4-diphosphocytidyl-2-C-methyl-D-erythritol kinase (288 aa).

Lysine 11 is a catalytic residue. 100-110 contributes to the ATP binding site; it reads PIAAGLGSGSS. Aspartate 140 is an active-site residue.

It belongs to the GHMP kinase family. IspE subfamily.

It catalyses the reaction 4-CDP-2-C-methyl-D-erythritol + ATP = 4-CDP-2-C-methyl-D-erythritol 2-phosphate + ADP + H(+). The protein operates within isoprenoid biosynthesis; isopentenyl diphosphate biosynthesis via DXP pathway; isopentenyl diphosphate from 1-deoxy-D-xylulose 5-phosphate: step 3/6. Functionally, catalyzes the phosphorylation of the position 2 hydroxy group of 4-diphosphocytidyl-2C-methyl-D-erythritol. The polypeptide is 4-diphosphocytidyl-2-C-methyl-D-erythritol kinase (Wolbachia pipientis wMel).